Reading from the N-terminus, the 444-residue chain is Phosphoribosylamine--glycine ligase (444 aa).

Residues 109–324 enclose the ATP-grasp domain; sequence RNLFKKYEID…FLDVCFAIAE (216 aa). 140 to 202 lines the ATP pocket; sequence MTSLGKDVVV…EEKLVGVEFT (63 aa). Residues Gln282, Glu294, and Asn296 each contribute to the Mg(2+) site. Residues Gln282, Glu294, and Asn296 each coordinate Mn(2+).

The protein belongs to the GARS family. Mg(2+) serves as cofactor. Mn(2+) is required as a cofactor.

The catalysed reaction is 5-phospho-beta-D-ribosylamine + glycine + ATP = N(1)-(5-phospho-beta-D-ribosyl)glycinamide + ADP + phosphate + H(+). The protein operates within purine metabolism; IMP biosynthesis via de novo pathway; N(1)-(5-phospho-D-ribosyl)glycinamide from 5-phospho-alpha-D-ribose 1-diphosphate: step 2/2. In Methanococcus maripaludis (strain C5 / ATCC BAA-1333), this protein is Phosphoribosylamine--glycine ligase.